An 80-amino-acid polypeptide reads, in one-letter code: Trefoil factor 3 (80 aa).

Residues 1 to 21 (MEARVLWLLALVLALGSSSLA) form the signal peptide. The region spanning 30–73 (NLCAVPAKNRVDCGYPEISPEQCVNRGCCFDSSIPEVPWCFKPL) is the P-type domain. Intrachain disulfides connect C32–C58, C42–C57, and C52–C69.

Monomer. Homodimer; disulfide-linked.

The protein resides in the secreted. Its subcellular location is the extracellular space. It localises to the extracellular matrix. The protein localises to the cytoplasm. In terms of biological role, involved in the maintenance and repair of the intestinal mucosa. Promotes the mobility of epithelial cells in healing processes (motogen). This is Trefoil factor 3 (TFF3) from Felis catus (Cat).